Reading from the N-terminus, the 73-residue chain is ATP synthase subunit 9, mitochondrial (73 aa).

The next 2 membrane-spanning stretches (helical) occupy residues 12 to 32 and 50 to 70; these read VAALGLIGAGIGVGIVFAALI and ILGFALSEATGLFALMVSFLL.

It belongs to the ATPase C chain family. As to quaternary structure, F-type ATPases have 2 components, CF(1) - the catalytic core - and CF(0) - the membrane proton channel. CF(1) has five subunits: alpha(3), beta(3), gamma(1), delta(1), epsilon(1). CF(0) has three main subunits: a, b and c.

Its subcellular location is the mitochondrion inner membrane. Its function is as follows. Mitochondrial membrane ATP synthase (F(1)F(0) ATP synthase or Complex V) produces ATP from ADP in the presence of a proton gradient across the membrane which is generated by electron transport complexes of the respiratory chain. F-type ATPases consist of two structural domains, F(1) - containing the extramembraneous catalytic core and F(0) - containing the membrane proton channel, linked together by a central stalk and a peripheral stalk. During catalysis, ATP synthesis in the catalytic domain of F(1) is coupled via a rotary mechanism of the central stalk subunits to proton translocation. Part of the complex F(0) domain. A homomeric c-ring of probably 10 subunits is part of the complex rotary element. This chain is ATP synthase subunit 9, mitochondrial (ATP9), found in Mycosarcoma maydis (Corn smut fungus).